Consider the following 561-residue polypeptide: CWF19-like protein mug161 (561 aa).

Positions 286-338 (QQTNKFHKSKSSTALFKSKKDSSSSLNKMHKSESHSALNNLHKSESGTSLNNR) are disordered. Serine 296 carries the post-translational modification Phosphoserine. At threonine 298 the chain carries Phosphothreonine. 4 positions are modified to phosphoserine: serine 317, serine 319, serine 331, and serine 334. The span at 320 to 337 (HSALNNLHKSESGTSLNN) shows a compositional bias: polar residues.

It belongs to the CWF19 family.

It is found in the nucleus. Functionally, has a role in meiosis. This is CWF19-like protein mug161 (mug161) from Schizosaccharomyces pombe (strain 972 / ATCC 24843) (Fission yeast).